A 126-amino-acid polypeptide reads, in one-letter code: UPF0102 protein HD_0802 (126 aa).

This sequence belongs to the UPF0102 family.

The chain is UPF0102 protein HD_0802 from Haemophilus ducreyi (strain 35000HP / ATCC 700724).